Reading from the N-terminus, the 179-residue chain is Large ribosomal subunit protein uL5 (179 aa).

It belongs to the universal ribosomal protein uL5 family. Part of the 50S ribosomal subunit; part of the 5S rRNA/L5/L18/L25 subcomplex. Contacts the 5S rRNA and the P site tRNA. Forms a bridge to the 30S subunit in the 70S ribosome.

This is one of the proteins that bind and probably mediate the attachment of the 5S RNA into the large ribosomal subunit, where it forms part of the central protuberance. In the 70S ribosome it contacts protein S13 of the 30S subunit (bridge B1b), connecting the 2 subunits; this bridge is implicated in subunit movement. Contacts the P site tRNA; the 5S rRNA and some of its associated proteins might help stabilize positioning of ribosome-bound tRNAs. The chain is Large ribosomal subunit protein uL5 from Tolumonas auensis (strain DSM 9187 / NBRC 110442 / TA 4).